The sequence spans 158 residues: Cyclic pyranopterin monophosphate synthase (158 aa).

Residues 75-77 and 113-114 contribute to the substrate site; these read LCH and ME. Aspartate 128 is an active-site residue.

This sequence belongs to the MoaC family. As to quaternary structure, homohexamer; trimer of dimers.

It catalyses the reaction (8S)-3',8-cyclo-7,8-dihydroguanosine 5'-triphosphate = cyclic pyranopterin phosphate + diphosphate. The protein operates within cofactor biosynthesis; molybdopterin biosynthesis. Functionally, catalyzes the conversion of (8S)-3',8-cyclo-7,8-dihydroguanosine 5'-triphosphate to cyclic pyranopterin monophosphate (cPMP). The chain is Cyclic pyranopterin monophosphate synthase from Ralstonia pickettii (strain 12J).